Here is a 1625-residue protein sequence, read N- to C-terminus: Nonribosomal peptide synthetase aclP (1625 aa).

Positions 47 to 123 constitute a Carrier 1 domain; that stretch reads TTMNPSSQLL…ALFTDLLSSE (77 aa). O-(pantetheine 4'-phosphoryl)serine is present on Ser-84. Residues 127–157 form a disordered region; sequence IPIPDPSDDSDDLSNPSSSTGGSPRVATPIS. The interval 286-567 is condensation 1; it reads ASSQSTVIWA…KYFQRALQLL (282 aa). An adenylation region spans residues 614–997; that stretch reads FESAVSRNPM…GRTDRQIKLR (384 aa). The region spanning 1096–1171 is the Carrier 2 domain; sequence SPMEKLVGDA…HLAAAIDSGL (76 aa). An O-(pantetheine 4'-phosphoryl)serine modification is found at Ser-1131. Positions 1195–1585 are condensation 2; sequence EWWHKYQINE…LQARIPLALS (391 aa).

The protein belongs to the NRP synthetase family.

The protein operates within mycotoxin biosynthesis. Functionally, nonribosomal peptide synthetase; part of the gene cluster that mediates the biosynthesis of aspirochlorine (or antibiotic A30641), an unusual halogenated spiro compound with distinctive antifungal properties due to selective inhibition of protein biosynthesis, and which is also active against bacteria, viruses, and murine tumor cells. The non-ribosomal peptide synthetase (NRPS) aclP is responsible the formation of the diketopiperazine (DKP) core from the condensation of 2 phenylalanine residues. One Phe residue is tailored into chlorotyrosine by hydroxylation and chlorination, whereas the second Phe undergoes an unprecedented C-C bond cleavage to be converted into glycine. After formation of the DKP, sulfur is incorporated into the DKP by conjugation with glutathione by aclG, followed by its stepwise degradation to the thiol by aclI, aclJ and aclK, and the dithiol oxidation by aclT. In addition, oxygenases (aclB, aclC, aclL and aclO) and O-methyltransferases (aclM and aclU) act as tailoring enzymes to produce the intermediate dechloroaspirochlorine. Ultimately, chlorination of dechloroaspirochlorine by the halogenase aclH is the last step in the aspirochlorine pathway. The sequence is that of Nonribosomal peptide synthetase aclP from Aspergillus oryzae (strain ATCC 42149 / RIB 40) (Yellow koji mold).